Here is a 466-residue protein sequence, read N- to C-terminus: Ribulose bisphosphate carboxylase large chain (466 aa).

Residue Lys-5 is modified to N6,N6,N6-trimethyllysine. Positions 114 and 164 each coordinate substrate. The active-site Proton acceptor is the Lys-166. Lys-168 is a substrate binding site. The Mg(2+) site is built by Lys-192, Asp-194, and Glu-195. Lys-192 carries the post-translational modification N6-carboxylysine. His-285 serves as the catalytic Proton acceptor. The substrate site is built by Arg-286, His-318, and Ser-370.

The protein belongs to the RuBisCO large chain family. Type I subfamily. In terms of assembly, heterohexadecamer of 8 large chains and 8 small chains; disulfide-linked. The disulfide link is formed within the large subunit homodimers. Mg(2+) is required as a cofactor. Post-translationally, the disulfide bond which can form in the large chain dimeric partners within the hexadecamer appears to be associated with oxidative stress and protein turnover.

Its subcellular location is the plastid. The protein localises to the chloroplast. The catalysed reaction is 2 (2R)-3-phosphoglycerate + 2 H(+) = D-ribulose 1,5-bisphosphate + CO2 + H2O. The enzyme catalyses D-ribulose 1,5-bisphosphate + O2 = 2-phosphoglycolate + (2R)-3-phosphoglycerate + 2 H(+). In terms of biological role, ruBisCO catalyzes two reactions: the carboxylation of D-ribulose 1,5-bisphosphate, the primary event in carbon dioxide fixation, as well as the oxidative fragmentation of the pentose substrate in the photorespiration process. Both reactions occur simultaneously and in competition at the same active site. The polypeptide is Ribulose bisphosphate carboxylase large chain (Coriaria myrtifolia (Tanner's sumac)).